Consider the following 147-residue polypeptide: Ponticulin-like protein C2 (147 aa).

Residues 1 to 20 (MKFTKPLLLLIVAIIASSNA) form the signal peptide. Asn-118 is lipidated: GPI-like-anchor amidated asparagine. Asn-118 is a glycosylation site (N-linked (GlcNAc...) asparagine). Positions 119–147 (SSESDSSDSTRIGASFALFALALLSMLAL) are cleaved as a propeptide — removed in mature form.

This sequence belongs to the ponticulin family. The GPI-like-anchor contains a phosphoceramide group, rather than a phosphatidyl group.

The protein localises to the cell membrane. The sequence is that of Ponticulin-like protein C2 (ponC2) from Dictyostelium discoideum (Social amoeba).